Reading from the N-terminus, the 298-residue chain is 4-hydroxy-tetrahydrodipicolinate synthase (298 aa).

Pyruvate is bound at residue Thr-48. Residue Tyr-137 is the Proton donor/acceptor of the active site. Lys-166 serves as the catalytic Schiff-base intermediate with substrate. Residue Ile-207 coordinates pyruvate.

This sequence belongs to the DapA family. As to quaternary structure, homotetramer; dimer of dimers.

It localises to the cytoplasm. The catalysed reaction is L-aspartate 4-semialdehyde + pyruvate = (2S,4S)-4-hydroxy-2,3,4,5-tetrahydrodipicolinate + H2O + H(+). It participates in amino-acid biosynthesis; L-lysine biosynthesis via DAP pathway; (S)-tetrahydrodipicolinate from L-aspartate: step 3/4. Catalyzes the condensation of (S)-aspartate-beta-semialdehyde [(S)-ASA] and pyruvate to 4-hydroxy-tetrahydrodipicolinate (HTPA). This chain is 4-hydroxy-tetrahydrodipicolinate synthase, found in Campylobacter jejuni subsp. jejuni serotype O:2 (strain ATCC 700819 / NCTC 11168).